Reading from the N-terminus, the 142-residue chain is MAIIIGSDEAGKRLKEVIKSYLLDNKYDVVDVTEGQEVDFVDATLAVAKDVQSQEGNLGIVIDAFGTGSFMVATKIKGMIAAEVSDERSGYMTRGHNNSRMITMGSEIVGDTLAKNVVKGFVEGKYDGGRHQIRVDMLNKMC.

It belongs to the LacAB/RpiB family. In terms of assembly, heteromultimeric protein consisting of LacA and LacB.

It catalyses the reaction aldehydo-D-galactose 6-phosphate = keto-D-tagatose 6-phosphate. It functions in the pathway carbohydrate metabolism; D-galactose 6-phosphate degradation; D-tagatose 6-phosphate from D-galactose 6-phosphate: step 1/1. The polypeptide is Galactose-6-phosphate isomerase subunit LacA (Staphylococcus aureus).